The sequence spans 68 residues: Kasstasin (68 aa).

The first 20 residues, 1-20, serve as a signal peptide directing secretion; the sequence is MMKKSMLLLFFLGMVSFSLA. The propeptide occupies 21–44; it reads DDKREDEGEEKRADEGEEKRAAEE. The interval 22–41 is disordered; that stretch reads DKREDEGEEKRADEGEEKRA. Lysine 67 carries the post-translational modification Lysine amide.

The protein belongs to the frog skin active peptide (FSAP) family. Brevinin subfamily. In terms of tissue distribution, expressed by the skin dorsal glands.

The protein resides in the secreted. Peptide with potent vasoconstrictor properties (EC50=25 pM). Has moderate antimicrobial activity against Gram-positive bacterium S.aureus (MIC=55 uM) and against Gram-negative bacterium E.coli (MIC=110 uM). Not active against fungus C.albicans. Has weak hemolytic activity against horse erythrocytes. The sequence is that of Kasstasin from Phlyctimantis maculatus (Red-legged running frog).